We begin with the raw amino-acid sequence, 400 residues long: Tryptophan synthase beta chain (400 aa).

Residue K92 is modified to N6-(pyridoxal phosphate)lysine.

This sequence belongs to the TrpB family. In terms of assembly, tetramer of two alpha and two beta chains. It depends on pyridoxal 5'-phosphate as a cofactor.

The catalysed reaction is (1S,2R)-1-C-(indol-3-yl)glycerol 3-phosphate + L-serine = D-glyceraldehyde 3-phosphate + L-tryptophan + H2O. It functions in the pathway amino-acid biosynthesis; L-tryptophan biosynthesis; L-tryptophan from chorismate: step 5/5. In terms of biological role, the beta subunit is responsible for the synthesis of L-tryptophan from indole and L-serine. The chain is Tryptophan synthase beta chain from Chromobacterium violaceum (strain ATCC 12472 / DSM 30191 / JCM 1249 / CCUG 213 / NBRC 12614 / NCIMB 9131 / NCTC 9757 / MK).